Here is a 962-residue protein sequence, read N- to C-terminus: MPRSIWFKALLLFVALWAPLSQAETGWQPIQETIRKSDKDNRQYQAIRLDNGMVVLLVSDPQAVKSLSALVVPVGSLEDPEAYQGLAHYLEHMSLMGSKKYPQADSLAEYLKMHGGSHNASTAPYRTAFYLEVENDALPGAVDRLADAIAEPLLDKKYAERERNAVNAELTMARTRDGMRMAQVSAETINPAHPGSKFSGGNLETLSDKPGNPVQQALKDFHEKYYSANLMKAVIYSNKPLPELAKMAADTFGRVPNKESKKPEITVPVVTDAQKGIIIHYVPALPRKVLRVEFRIDNNSAKFRSKTDELITYLIGNRSPGTLSDWLQKQGLVEGISANSDPIVNGNSGVLAISASLTDKGLANRDQVVAAIFSYLNLLREKGIDKQYFDELANVLDIDFRYPSITRDMDYVEWLADTMIRVPVEHTLDAVNIADRYDAKAVKERLAMMTPQNARIWYISPKEPHNKTAYFVDAPYQVDKISEQTFADWQKKAANIALSLPELNPYIPDDFSLIKSEKKYDHPELIVDESNLRVVYAPSRYFASEPKADVSLILRNPKAMDSARNQVMFALNDYLAGLALDQLSNQASVGGISFSTNANNGLMVNANGYTQRLPQLFQALLEGYFSYTATEDQLEQAKSWYNQMMDSAEKGKAFEQAIMPAQMLSQVPYFSRDERRKILPSITLKEVLAYRDALKSGARPEFMVIGNMTEAQATTLARHVQKQLGADGSEWCRNKDVVVDKKQSVIFEKAGNSTDSALAAIFVPTGYDEYTSSAYSSLLGQIVQPWFYNQLRTEEQLGYAVFAFPMSVGRQWGMGFLLQSNDKQPSFLWERYKAFFPTAEAKLRTMKPEEFAQIQQAVITQMLQAPQTLGEEASKLSKDFDRGNMRFDSRDKIVAQIKLLTPQKLADFFHQAVVEPQGMAILSQISGSQNGKAEYVHPEGWKVWENVSALQQTMPLMSEKNE.

Positions M1–A23 are cleaved as a signal peptide. H88 serves as a coordination point for Zn(2+). E91 (proton acceptor) is an active-site residue. H92 and E169 together coordinate Zn(2+).

This sequence belongs to the peptidase M16 family. As to quaternary structure, monomer. Zn(2+) is required as a cofactor.

Its subcellular location is the periplasm. It catalyses the reaction Preferential cleavage of 16-Tyr-|-Leu-17 and 25-Phe-|-Tyr-26 bonds of oxidized insulin B chain. Also acts on other substrates of Mw less than 7 kDa such as insulin and glucagon.. Its function is as follows. Endopeptidase that degrades small peptides of less than 7 kDa, such as glucagon and insulin. This is Protease 3 (ptrA) from Escherichia coli O6:H1 (strain CFT073 / ATCC 700928 / UPEC).